The following is a 145-amino-acid chain: Cuticle protein 5 (145 aa).

The sequence is that of Cuticle protein 5 from Blaberus craniifer (Death's head cockroach).